The following is a 606-amino-acid chain: Membrane protein insertase YidC (606 aa).

A helical transmembrane segment spans residues 8-28 (LILATALSFIVILVWFVLFPP). The segment at 33 to 59 (MPLTGETSTELTPDAATGSLPSVTSDT) is disordered. 6 helical membrane passes run 116 to 136 (IVTM…YGWA), 348 to 368 (FIDS…FFLL), 374 to 394 (FIGN…AILL), 448 to 468 (LPIL…FVTI), 506 to 526 (SIMA…SMWL), and 542 to 562 (IFAW…SGLV).

It belongs to the OXA1/ALB3/YidC family. Type 1 subfamily. In terms of assembly, interacts with the Sec translocase complex via SecD. Specifically interacts with transmembrane segments of nascent integral membrane proteins during membrane integration.

It is found in the cell inner membrane. Functionally, required for the insertion and/or proper folding and/or complex formation of integral membrane proteins into the membrane. Involved in integration of membrane proteins that insert both dependently and independently of the Sec translocase complex, as well as at least some lipoproteins. Aids folding of multispanning membrane proteins. The protein is Membrane protein insertase YidC of Roseobacter denitrificans (strain ATCC 33942 / OCh 114) (Erythrobacter sp. (strain OCh 114)).